The sequence spans 430 residues: Pyrokinin-1 receptor (430 aa).

The Extracellular segment spans residues 1–16 (MSAGNMSHDLGPPRDP). An N-linked (GlcNAc...) asparagine glycan is attached at Asn5. A helical membrane pass occupies residues 17-37 (LAIVIPVTVVYSLIFITGVVG). The Cytoplasmic portion of the chain corresponds to 38-53 (NISTCIVIKKNRSMHT). The chain crosses the membrane as a helical span at residues 54–74 (ATNYYLFSLAISDFLLLLSGV). Over 75–96 (PQEVSYIWSKYPYVFGEYICIG) the chain is Extracellular. Residues Cys94 and Cys171 are joined by a disulfide bond. A helical transmembrane segment spans residues 97–117 (RGLLAETSANATVLTITAFTV). The Cytoplasmic segment spans residues 118-140 (ERYIAICHPFLGQAMSKLSRAIR). The helical transmembrane segment at 141-161 (IIVLVWIMAIVTAIPQAAQFG) threads the bilayer. The Extracellular segment spans residues 162 to 185 (IEHYSGVEQCGIVRVIVKHSFQLS). Residues 186-206 (TFIFFLAPMSIILVLYLLIGV) form a helical membrane-spanning segment. At 207 to 281 (HLYRSTLVEG…GRLNHYGTRR (75 aa)) the chain is on the cytoplasmic side. A helical transmembrane segment spans residues 282-302 (VLRMLVAVVVCFFLCWAPFHA). Residues 303–321 (QRLIAIYAPARGAKLRDQH) lie on the Extracellular side of the membrane. A helical transmembrane segment spans residues 322 to 342 (EFVYTVMTYVSGVLYYLSTCI). Residues 343 to 430 (NPLLYNIMSH…QYAMIGVQVN (88 aa)) lie on the Cytoplasmic side of the membrane. Residues 388–397 (TNSSQTQRFS) are compositionally biased toward polar residues. Residues 388 to 413 (TNSSQTQRFSIESAEQPKPSIMQNPT) are disordered.

The protein belongs to the G-protein coupled receptor 1 family.

It is found in the cell membrane. In terms of biological role, receptor for the neuropeptide CAP-3/pyrokinin-1 (TGPSASSGLWFGPRL-amide). Also activated weakly by other neuropeptides terminating in the sequence PRL-amide including pyrokinin-2, Hug-gamma, and ecdysis-triggering-hormone-1. The activity of this receptor is mediated by G proteins which activate a phosphatidyl-inositol-calcium second messenger system. The chain is Pyrokinin-1 receptor from Drosophila melanogaster (Fruit fly).